The sequence spans 262 residues: Hydroxyethylthiazole kinase (262 aa).

Met-44 contributes to the substrate binding site. Residues Arg-118 and Thr-166 each contribute to the ATP site. Gly-193 serves as a coordination point for substrate.

It belongs to the Thz kinase family. The cofactor is Mg(2+).

The enzyme catalyses 5-(2-hydroxyethyl)-4-methylthiazole + ATP = 4-methyl-5-(2-phosphooxyethyl)-thiazole + ADP + H(+). It participates in cofactor biosynthesis; thiamine diphosphate biosynthesis; 4-methyl-5-(2-phosphoethyl)-thiazole from 5-(2-hydroxyethyl)-4-methylthiazole: step 1/1. In terms of biological role, catalyzes the phosphorylation of the hydroxyl group of 4-methyl-5-beta-hydroxyethylthiazole (THZ). In Chlamydia caviae (strain ATCC VR-813 / DSM 19441 / 03DC25 / GPIC) (Chlamydophila caviae), this protein is Hydroxyethylthiazole kinase.